The following is a 286-amino-acid chain: Acetyl-coenzyme A carboxylase carboxyl transferase subunit beta (286 aa).

Positions 28 to 286 constitute a CoA carboxyltransferase N-terminal domain; it reads LMQKCSNCKK…KMHMDGRQLK (259 aa). Residues Cys-32, Cys-35, Cys-51, and Cys-54 each contribute to the Zn(2+) site. The segment at 32–54 adopts a C4-type zinc-finger fold; the sequence is CSNCKKIYYRKEMVKALQVCPNC.

This sequence belongs to the AccD/PCCB family. Acetyl-CoA carboxylase is a heterohexamer composed of biotin carboxyl carrier protein (AccB), biotin carboxylase (AccC) and two subunits each of ACCase subunit alpha (AccA) and ACCase subunit beta (AccD). Zn(2+) is required as a cofactor.

It localises to the cytoplasm. The enzyme catalyses N(6)-carboxybiotinyl-L-lysyl-[protein] + acetyl-CoA = N(6)-biotinyl-L-lysyl-[protein] + malonyl-CoA. The protein operates within lipid metabolism; malonyl-CoA biosynthesis; malonyl-CoA from acetyl-CoA: step 1/1. In terms of biological role, component of the acetyl coenzyme A carboxylase (ACC) complex. Biotin carboxylase (BC) catalyzes the carboxylation of biotin on its carrier protein (BCCP) and then the CO(2) group is transferred by the transcarboxylase to acetyl-CoA to form malonyl-CoA. The protein is Acetyl-coenzyme A carboxylase carboxyl transferase subunit beta of Oceanobacillus iheyensis (strain DSM 14371 / CIP 107618 / JCM 11309 / KCTC 3954 / HTE831).